The following is a 391-amino-acid chain: NADH-quinone oxidoreductase subunit D (391 aa).

It belongs to the complex I 49 kDa subunit family. As to quaternary structure, NDH-1 is composed of 14 different subunits. Subunits NuoB, C, D, E, F, and G constitute the peripheral sector of the complex.

The protein localises to the cell inner membrane. It catalyses the reaction a quinone + NADH + 5 H(+)(in) = a quinol + NAD(+) + 4 H(+)(out). NDH-1 shuttles electrons from NADH, via FMN and iron-sulfur (Fe-S) centers, to quinones in the respiratory chain. The immediate electron acceptor for the enzyme in this species is believed to be ubiquinone. Couples the redox reaction to proton translocation (for every two electrons transferred, four hydrogen ions are translocated across the cytoplasmic membrane), and thus conserves the redox energy in a proton gradient. The polypeptide is NADH-quinone oxidoreductase subunit D (Rickettsia massiliae (strain Mtu5)).